A 191-amino-acid polypeptide reads, in one-letter code: Protein GrpE (191 aa).

This sequence belongs to the GrpE family. Homodimer.

It localises to the cytoplasm. Functionally, participates actively in the response to hyperosmotic and heat shock by preventing the aggregation of stress-denatured proteins, in association with DnaK and GrpE. It is the nucleotide exchange factor for DnaK and may function as a thermosensor. Unfolded proteins bind initially to DnaJ; upon interaction with the DnaJ-bound protein, DnaK hydrolyzes its bound ATP, resulting in the formation of a stable complex. GrpE releases ADP from DnaK; ATP binding to DnaK triggers the release of the substrate protein, thus completing the reaction cycle. Several rounds of ATP-dependent interactions between DnaJ, DnaK and GrpE are required for fully efficient folding. This chain is Protein GrpE, found in Listeria welshimeri serovar 6b (strain ATCC 35897 / DSM 20650 / CCUG 15529 / CIP 8149 / NCTC 11857 / SLCC 5334 / V8).